Here is a 1236-residue protein sequence, read N- to C-terminus: MSDQASDPYMYDDDSSSITPEDCWTVISSFFQEKGLVSQQLDSFDEFIESTIQELVWEDSRLILDQPAQHTSEEDHENRRYEITFGKIYISKPTQTEGDGTTHPMFPQEARLRNLTYSSPLYVDMTKRVLKSDDNAGNEHELEWIEEEIKDEEPSTKVYLGKVPIMLRSKFCMLRDLGEHEFYELKECPYDMGGYFVINGSEKVLIAQERSAANIVQVFKKAAPSPISHVAEIRSALERGSRLISSMQIKLYGREEKSTSNRTIKATLPYIKEDIPIVIVFRALGIVPDGDILEHICYDANDWQMLEMLKPCVEEGFVIQEREVALDFIGRRGALGIKREKRIQYAKDILQKELLPNITQDEGFETRKAFFLGYMVNRLLLCALERKEPDDRDHFGKKRLDLAGPLLASLFRILFKKLTKDIYNYMQRCVENDKVFNLTLAVKSQTITDGLRYSLATGNWGEQKKAMSSRAGVSQVLNRYTYSSTLSHLRRTNTPIGRDGKIAKPRQLHNTHWGLVCPAETPEGQACGLVKNLSLMSCISVGTPSEPILYFLEEWGMEPLEDYVPSNSPDSTRVFVNGVWVGTHREPAHLVDTMRSLRRRGDISPEVSIIRDIREKEFKIFTDAGRVYRPLFIVDDDPESETKGELKLQKEHIHKLLNAEYSEEYATNEFGEEEGPYGWSSLVNDGVVEYVDAEEEETIMIAMTPEDLEASKSSLTATQQKSLQLEEQELDPAKRIKPTNSSTTSTFTHCEIHPSMILGVAASIIPFPDHNQSPRNTYQSAMGKQAMGVFLTNYSVRMDTMANILYYPQKPLATTRAMEHLKFRELPAGQNAIVAIACYSGYNQEDSMIMNQSSIDRGLFRSLFFRTYMDLEKRQGMKALETFEKPSRSDTLRLKHGTYEKLDDDGLIAPGIRVSGEDIIIGKTTPIPPDTEELGQRTQYHTKRDASTPLRSTESGIVDQVLLTTNGDGAKFVKVRMRTTKVPQIGDKFASRHGQKGTVGVTYRHEDMPFTSQGIVPDLIINPHAIPSRMTVAHLIECLLSKVSSLSGLEGDASPFTDVTAEAVSKLLREHGYQSRGFEVMYHGHTGKKLMAQVFFGPTYYQRLRHMVDDKIHARARGPVQVLTRQPVEGRSRDGGLRFGEMERDCMIAHGAAGFLKERLMEASDAFRVHVCGVCGLMSVIANLKKNQFECRSCKNKTNIYQIHIPYAAKLLFQELMAMNISPRLYTERSGVSVRT.

Position 846 (aspartate 846) interacts with Mg(2+). Residues cysteine 1172, cysteine 1175, cysteine 1191, and cysteine 1194 each contribute to the Zn(2+) site. The segment at 1172 to 1194 adopts a C4-type zinc-finger fold; sequence CGVCGLMSVIANLKKNQFECRSC.

It belongs to the RNA polymerase beta chain family. In terms of assembly, component of the RNA polymerase II (Pol II) complex consisting of 12 subunits.

It localises to the nucleus. It catalyses the reaction RNA(n) + a ribonucleoside 5'-triphosphate = RNA(n+1) + diphosphate. Its function is as follows. DNA-dependent RNA polymerase catalyzes the transcription of DNA into RNA using the four ribonucleoside triphosphates as substrates. Second largest component of RNA polymerase II which synthesizes mRNA precursors and many functional non-coding RNAs. Proposed to contribute to the polymerase catalytic activity and forms the polymerase active center together with the largest subunit. Pol II is the central component of the basal RNA polymerase II transcription machinery. It is composed of mobile elements that move relative to each other. RPB2 is part of the core element with the central large cleft, the clamp element that moves to open and close the cleft and the jaws that are thought to grab the incoming DNA template. The sequence is that of DNA-directed RNA polymerase II subunit RPB2 (RPB2) from Meyerozyma guilliermondii (strain ATCC 6260 / CBS 566 / DSM 6381 / JCM 1539 / NBRC 10279 / NRRL Y-324) (Yeast).